Reading from the N-terminus, the 38-residue chain is Large ribosomal subunit protein bL36 (38 aa).

The protein belongs to the bacterial ribosomal protein bL36 family.

The polypeptide is Large ribosomal subunit protein bL36 (Chlorobium limicola (strain DSM 245 / NBRC 103803 / 6330)).